The following is a 173-amino-acid chain: Transcriptional repressor NrdR (173 aa).

The segment at 3-34 (CPFCQHADTRVIDSRVSEDGATIRRRRECEAC) is a zinc-finger region. Residues 49-139 (PAIVKSDGTR…VYRSFEDVAD (91 aa)) form the ATP-cone domain.

This sequence belongs to the NrdR family. Requires Zn(2+) as cofactor.

Negatively regulates transcription of bacterial ribonucleotide reductase nrd genes and operons by binding to NrdR-boxes. The polypeptide is Transcriptional repressor NrdR (Stenotrophomonas maltophilia (strain R551-3)).